Here is a 514-residue protein sequence, read N- to C-terminus: Steroid 17-alpha-hydroxylase/17,20 lyase (514 aa).

Residue Cys-445 participates in heme binding.

This sequence belongs to the cytochrome P450 family. Requires heme as cofactor.

Its subcellular location is the membrane. The enzyme catalyses a C21-steroid + reduced [NADPH--hemoprotein reductase] + O2 = a 17alpha-hydroxy-C21-steroid + oxidized [NADPH--hemoprotein reductase] + H2O + H(+). It carries out the reaction 17alpha-hydroxyprogesterone + reduced [NADPH--hemoprotein reductase] + O2 = androst-4-ene-3,17-dione + acetate + oxidized [NADPH--hemoprotein reductase] + H2O + 2 H(+). It catalyses the reaction 17alpha-hydroxypregnenolone + reduced [NADPH--hemoprotein reductase] + O2 = 3beta-hydroxyandrost-5-en-17-one + acetate + oxidized [NADPH--hemoprotein reductase] + H2O + 2 H(+). It functions in the pathway lipid metabolism; steroid biosynthesis. Functionally, conversion of pregnenolone and progesterone to their 17-alpha-hydroxylated products and subsequently to dehydroepiandrosterone (DHEA) and androstenedione. Catalyzes both the 17-alpha-hydroxylation and the 17,20-lyase reaction. The sequence is that of Steroid 17-alpha-hydroxylase/17,20 lyase (cyp17a1) from Ictalurus punctatus (Channel catfish).